A 192-amino-acid chain; its full sequence is Ribosome hibernation promotion factor (192 aa).

The segment at 95 to 129 is disordered; that stretch reads RVNRKHKTHGEPEAFVAEVQEAPPENVDDVNAEPT. The segment covering 120–129 has biased composition (acidic residues); that stretch reads NVDDVNAEPT.

It belongs to the HPF/YfiA ribosome-associated protein family. Long HPF subfamily. As to quaternary structure, interacts with 100S ribosomes.

It localises to the cytoplasm. In terms of biological role, required for dimerization of active 70S ribosomes into 100S ribosomes in stationary phase; 100S ribosomes are translationally inactive and sometimes present during exponential growth. The sequence is that of Ribosome hibernation promotion factor from Staphylococcus haemolyticus (strain JCSC1435).